The sequence spans 199 residues: Lipid A acyltransferase PagP (199 aa).

Positions 1 to 25 (MNYKDIINACILSGVFLLHSPSALA) are cleaved as a signal peptide. Residues His-74, Asp-117, and Ser-118 contribute to the active site.

It belongs to the lipid A palmitoyltransferase family. Homodimer.

The protein localises to the cell outer membrane. It carries out the reaction a lipid A + a 1,2-diacyl-sn-glycero-3-phosphocholine = a hepta-acyl lipid A + a 2-acyl-sn-glycero-3-phosphocholine. The catalysed reaction is a lipid IVA + a 1,2-diacyl-sn-glycero-3-phosphocholine = a lipid IVB + a 2-acyl-sn-glycero-3-phosphocholine. It catalyses the reaction a lipid IIA + a 1,2-diacyl-sn-glycero-3-phosphocholine = a lipid IIB + a 2-acyl-sn-glycero-3-phosphocholine. Transfers a fatty acid residue from the sn-1 position of a phospholipid to the N-linked hydroxyfatty acid chain on the proximal unit of lipid A or its precursors. The chain is Lipid A acyltransferase PagP from Yersinia pestis bv. Antiqua (strain Antiqua).